We begin with the raw amino-acid sequence, 360 residues long: MKPEEIERMRDEALAAFAAAGDLDALQEAKVAHTGGTSPLALANREIGALPPHAKAAAGKLVGQARGAVNKALGARQAELEAERDARVLVEEAVDVTLPYDRVPAGARHPLTTFMERVADVFVAMGYEIAEGPEVEAEWFNFDALNFTPDHPARQMQDTFFVEGPKGTEGDESGVVLRTHTSPVQARAMLDREPPVYIVCPGRVYRTDELDATHTPVFHQIELLAIDEGLTMADLKGTLDHMVQTLFGADMKTRLRPNYFPFTEPSAEMDMLCYVCKGESVGNPDRPCRTCSSEGWIELGGCGMVNPRVLTACGVDPEKYSGFAFGFGIERMLMFRHNVEDMRDMVEGDVRFTRPFGMEI.

Glu-264 is a binding site for Mg(2+).

It belongs to the class-II aminoacyl-tRNA synthetase family. Phe-tRNA synthetase alpha subunit type 1 subfamily. As to quaternary structure, tetramer of two alpha and two beta subunits. Mg(2+) serves as cofactor.

It localises to the cytoplasm. It carries out the reaction tRNA(Phe) + L-phenylalanine + ATP = L-phenylalanyl-tRNA(Phe) + AMP + diphosphate + H(+). This chain is Phenylalanine--tRNA ligase alpha subunit, found in Streptomyces avermitilis (strain ATCC 31267 / DSM 46492 / JCM 5070 / NBRC 14893 / NCIMB 12804 / NRRL 8165 / MA-4680).